Here is a 666-residue protein sequence, read N- to C-terminus: Heparin-sulfate lyase (666 aa).

The N-terminal stretch at 1–22 (MNKTFKYIVLLALACFVGKANA) is a signal peptide. Tyrosine 301 (proton acceptor) is an active-site residue.

Belongs to the polysaccharide lyase 12 family.

Its subcellular location is the periplasm. It carries out the reaction Elimination of sulfate, appears to act on linkages between N-acetyl-D-glucosamine and uronate. Product is an unsaturated sugar.. Its function is as follows. Specifically cleaves heparan sulfate-rich regions of acidic polysaccharides. Also able to degrade heparin and hyaluronic acid. Does not act on N,O-desulfated glucosamine or N-acetyl-O-sulfated glucosamine linkages. Functions in cleaving metazoan heparan sulfate and providing carbon, nitrogen and sulfate sources for microorganisms. The sequence is that of Heparin-sulfate lyase (hepC) from Bacteroides stercoris.